The sequence spans 278 residues: Aliphatic sulfonates import ATP-binding protein SsuB (278 aa).

The 222-residue stretch at 15 to 236 (LVLRDLSKRF…SQGDAAFAAL (222 aa)) folds into the ABC transporter domain. 47–54 (GRSGCGKS) contacts ATP. Residues 251–264 (PERESFTHPNDGEP) show a composition bias toward basic and acidic residues. The tract at residues 251–278 (PERESFTHPNDGEPRWPGVPAHGVRWAV) is disordered.

This sequence belongs to the ABC transporter superfamily. Aliphatic sulfonates importer (TC 3.A.1.17.2) family. The complex is composed of two ATP-binding proteins (SsuB), two transmembrane proteins (SsuC) and a solute-binding protein (SsuA).

It localises to the cell inner membrane. The catalysed reaction is ATP + H2O + aliphatic sulfonate-[sulfonate-binding protein]Side 1 = ADP + phosphate + aliphatic sulfonateSide 2 + [sulfonate-binding protein]Side 1.. Part of the ABC transporter complex SsuABC involved in aliphatic sulfonates import. Responsible for energy coupling to the transport system. The polypeptide is Aliphatic sulfonates import ATP-binding protein SsuB (Albidiferax ferrireducens (strain ATCC BAA-621 / DSM 15236 / T118) (Rhodoferax ferrireducens)).